Reading from the N-terminus, the 325-residue chain is Protein translocase subunit SecF (325 aa).

6 helical membrane-spanning segments follow: residues 36–56, 148–168, 175–197, 202–224, 254–274, and 281–301; these read GYILSALLMVISLFFIITKGF, LAQGAVYATLATLAMVLIYVG, LGFGSIASLAHDVIITLGVFSAL, DLTFVAAILSVVGYSINDSIVVF, TIITSVTTLVVVMALFFFGGP, and LALLVGIGFGTYSSIFVAIAI.

The protein belongs to the SecD/SecF family. SecF subfamily. As to quaternary structure, forms a complex with SecD. Part of the essential Sec protein translocation apparatus which comprises SecA, SecYEG and auxiliary proteins SecDF-YajC and YidC.

It is found in the cell inner membrane. Its function is as follows. Part of the Sec protein translocase complex. Interacts with the SecYEG preprotein conducting channel. SecDF uses the proton motive force (PMF) to complete protein translocation after the ATP-dependent function of SecA. The polypeptide is Protein translocase subunit SecF (Haemophilus influenzae (strain ATCC 51907 / DSM 11121 / KW20 / Rd)).